The following is a 314-amino-acid chain: Olfactory receptor 5P51 (314 aa).

Over 1–28 (MAFLEDGNHTAVTEFVLFGLTDDPVLRV) the chain is Extracellular. N-linked (GlcNAc...) asparagine glycosylation is present at asparagine 8. Residues 29-49 (ILFIIFLCIYLVNVSGNLSTI) form a helical membrane-spanning segment. At 50–57 (LLIRVSSQ) the chain is on the cytoplasmic side. A helical transmembrane segment spans residues 58 to 78 (LHHPMYFFLSHLASVDVGYSS). The Extracellular segment spans residues 79-102 (TVTPKMLANFLLERSTISYLGCTI). Cysteine 100 and cysteine 192 are oxidised to a cystine. The helical transmembrane segment at 103–123 (QLFSGAFVGTLECFLLATMAY) threads the bilayer. The Cytoplasmic portion of the chain corresponds to 124-136 (DRFIAICNPLLYS). Residues 137–157 (TKMSTQVCIQLLVGSYIGGFL) traverse the membrane as a helical segment. Topologically, residues 158-199 (NASSFLLSFFPLLFCGPNRVNHYSCDLTPLIELSCSGSNVPI) are extracellular. Residues 200-220 (VPASFCSAFVIIVTVSVIAIS) traverse the membrane as a helical segment. At 221-240 (YTYILITILKMRSTEGRQKA) the chain is on the cytoplasmic side. Residues 241–261 (FSTCTSHLTAVTLYYGTVTFI) form a helical membrane-spanning segment. At 262–274 (YVMPKSSYSTDQN) the chain is on the extracellular side. The chain crosses the membrane as a helical span at residues 275 to 295 (KVVSVFYTVVIPMLNPIIYSL). Topologically, residues 296 to 314 (RNNEIKGALKRQLARKIFS) are cytoplasmic.

It belongs to the G-protein coupled receptor 1 family.

It localises to the cell membrane. Potential odorant receptor. This is Olfactory receptor 5P51 from Mus musculus (Mouse).